Consider the following 606-residue polypeptide: NADH-ubiquinone oxidoreductase chain 5 (606 aa).

16 helical membrane passes run 1 to 21, 35 to 55, 87 to 107, 114 to 134, 140 to 160, 171 to 191, 211 to 233, 241 to 261, 272 to 292, 301 to 320, 325 to 347, 366 to 386, 413 to 433, 457 to 477, 482 to 502, and 582 to 602; these read MNLFTSFTLLTLLILTTPIMM, YVKNIVFCAFITSLVPAMVYL, LMFMPVALFITWSIMEFSMWY, INQFFKYLLLFLITMLILVTA, LFIGWEGVGIMSFLLIGWWFG, AILYNRIGDIGLLASMAWFLS, FPLMGLVLAAAGKSAQFGLHPWL, TPVSALLHSSTMVVAGIFLLV, LIQTVTLCLGAITTLFTAICA, IIAFSTSSQLGLMMVTIGLN, AFLHICTHAFFKAMLFLCSGSII, LPFTTTALIIGCLALTGMPFL, LIATSLTAVYSTRIIFFALLG, LLVGSIFAGFILSNSIPPMTT, MPLHLKLTALAMTTLGFIIAF, and GLIKLYFLSFLITITLSMILF.

The protein belongs to the complex I subunit 5 family. Core subunit of respiratory chain NADH dehydrogenase (Complex I) which is composed of 45 different subunits.

Its subcellular location is the mitochondrion inner membrane. It catalyses the reaction a ubiquinone + NADH + 5 H(+)(in) = a ubiquinol + NAD(+) + 4 H(+)(out). Its function is as follows. Core subunit of the mitochondrial membrane respiratory chain NADH dehydrogenase (Complex I) which catalyzes electron transfer from NADH through the respiratory chain, using ubiquinone as an electron acceptor. Essential for the catalytic activity and assembly of complex I. The protein is NADH-ubiquinone oxidoreductase chain 5 (MT-ND5) of Balaenoptera physalus (Fin whale).